The primary structure comprises 458 residues: Bifunctional protein GlmU (458 aa).

Residues 1–230 (MLQVDVVILA…DWEVSGVNDK (230 aa)) are pyrophosphorylase. Residues 9–12 (LAAG), lysine 23, glutamine 75, and 80–81 (GT) contribute to the UDP-N-acetyl-alpha-D-glucosamine site. Position 104 (aspartate 104) interacts with Mg(2+). Positions 139, 155, 170, and 228 each coordinate UDP-N-acetyl-alpha-D-glucosamine. Asparagine 228 contributes to the Mg(2+) binding site. A linker region spans residues 231–251 (IQLSILERAHQQDTANRLMEQ). Residues 252-458 (GVMFADPARF…NWKRPRKDRN (207 aa)) are N-acetyltransferase. Residues arginine 334 and lysine 352 each coordinate UDP-N-acetyl-alpha-D-glucosamine. Catalysis depends on histidine 364, which acts as the Proton acceptor. Residues tyrosine 367 and asparagine 378 each coordinate UDP-N-acetyl-alpha-D-glucosamine. Acetyl-CoA is bound by residues alanine 381, 387 to 388 (NY), serine 406, alanine 424, and arginine 441.

This sequence in the N-terminal section; belongs to the N-acetylglucosamine-1-phosphate uridyltransferase family. The protein in the C-terminal section; belongs to the transferase hexapeptide repeat family. As to quaternary structure, homotrimer. Mg(2+) is required as a cofactor.

The protein localises to the cytoplasm. It carries out the reaction alpha-D-glucosamine 1-phosphate + acetyl-CoA = N-acetyl-alpha-D-glucosamine 1-phosphate + CoA + H(+). It catalyses the reaction N-acetyl-alpha-D-glucosamine 1-phosphate + UTP + H(+) = UDP-N-acetyl-alpha-D-glucosamine + diphosphate. The protein operates within nucleotide-sugar biosynthesis; UDP-N-acetyl-alpha-D-glucosamine biosynthesis; N-acetyl-alpha-D-glucosamine 1-phosphate from alpha-D-glucosamine 6-phosphate (route II): step 2/2. It functions in the pathway nucleotide-sugar biosynthesis; UDP-N-acetyl-alpha-D-glucosamine biosynthesis; UDP-N-acetyl-alpha-D-glucosamine from N-acetyl-alpha-D-glucosamine 1-phosphate: step 1/1. It participates in bacterial outer membrane biogenesis; LPS lipid A biosynthesis. In terms of biological role, catalyzes the last two sequential reactions in the de novo biosynthetic pathway for UDP-N-acetylglucosamine (UDP-GlcNAc). The C-terminal domain catalyzes the transfer of acetyl group from acetyl coenzyme A to glucosamine-1-phosphate (GlcN-1-P) to produce N-acetylglucosamine-1-phosphate (GlcNAc-1-P), which is converted into UDP-GlcNAc by the transfer of uridine 5-monophosphate (from uridine 5-triphosphate), a reaction catalyzed by the N-terminal domain. The protein is Bifunctional protein GlmU of Nitrosomonas europaea (strain ATCC 19718 / CIP 103999 / KCTC 2705 / NBRC 14298).